The following is a 944-amino-acid chain: Probable UDP-N-acetylglucosamine--peptide N-acetylglucosaminyltransferase SPINDLY (944 aa).

11 TPR repeats span residues 34–67 (GTDA…DGAN), 68–101 (VEAL…DPKN), 102–135 (ACAL…DPSY), 143–176 (AIVL…DSHY), 177–210 (APAY…RPLY), 211–244 (AEAY…SPNF), 252–285 (AIAL…NWHY), 286–319 (ADAM…NPRC), 320–353 (AEAC…KPNF), 355–387 (QSLN…NPTY), and 388–421 (AEAY…DPDS). The catalytic region stretch occupies residues 422-944 (RNAGQNRLLA…RCEANGHSSR (523 aa)). The disordered stretch occupies residues 873-944 (NATAEEDNQS…RCEANGHSSR (72 aa)). Residues 897 to 911 (PQPQIMVNGVTSPEG) are compositionally biased toward polar residues.

This sequence belongs to the glycosyltransferase 41 family. O-GlcNAc transferase subfamily. As to expression, expressed in all parts of plants, including immature leaf blade, leaf sheath, mature leaf blade, roots, germinating embryos and aleurone layers.

Its subcellular location is the nucleus. It carries out the reaction L-seryl-[protein] + UDP-N-acetyl-alpha-D-glucosamine = 3-O-(N-acetyl-beta-D-glucosaminyl)-L-seryl-[protein] + UDP + H(+). The enzyme catalyses L-threonyl-[protein] + UDP-N-acetyl-alpha-D-glucosamine = 3-O-(N-acetyl-beta-D-glucosaminyl)-L-threonyl-[protein] + UDP + H(+). It functions in the pathway protein modification; protein glycosylation. Its function is as follows. Probable O-linked N-acetylglucosamine transferase (OGT) involved in various processes such as gibberellin (GA) signaling pathway. OGTs catalyze the addition of nucleotide-activated sugars directly onto the polypeptide through O-glycosidic linkage with the hydroxyl of serine or threonine. Probably acts by adding O-linked sugars to yet unknown proteins. This is Probable UDP-N-acetylglucosamine--peptide N-acetylglucosaminyltransferase SPINDLY (SPY) from Hordeum vulgare (Barley).